Here is a 156-residue protein sequence, read N- to C-terminus: Small ribosomal subunit protein uS7 (156 aa).

This sequence belongs to the universal ribosomal protein uS7 family. As to quaternary structure, part of the 30S ribosomal subunit. Contacts proteins S9 and S11.

In terms of biological role, one of the primary rRNA binding proteins, it binds directly to 16S rRNA where it nucleates assembly of the head domain of the 30S subunit. Is located at the subunit interface close to the decoding center, probably blocks exit of the E-site tRNA. The sequence is that of Small ribosomal subunit protein uS7 from Methylorubrum extorquens (strain CM4 / NCIMB 13688) (Methylobacterium extorquens).